The chain runs to 206 residues: Small ribosomal subunit protein uS4 (206 aa).

A disordered region spans residues 28-52; it reads YLDRRPYAPGQHGQRRGRGRPSDYS. Positions 96-171 constitute an S4 RNA-binding domain; the sequence is RRLDNVVFRM…QKRRRVSPWI (76 aa).

This sequence belongs to the universal ribosomal protein uS4 family. Part of the 30S ribosomal subunit. Contacts protein S5. The interaction surface between S4 and S5 is involved in control of translational fidelity.

One of the primary rRNA binding proteins, it binds directly to 16S rRNA where it nucleates assembly of the body of the 30S subunit. Functionally, with S5 and S12 plays an important role in translational accuracy. The chain is Small ribosomal subunit protein uS4 from Deinococcus geothermalis (strain DSM 11300 / CIP 105573 / AG-3a).